The chain runs to 258 residues: Putative L-lactate dehydrogenase operon regulatory protein (258 aa).

Residues 6–74 (RRLSDEVADR…RGGGTFIRWR (69 aa)) form the HTH gntR-type domain. The H-T-H motif DNA-binding region spans 34-53 (ERQLAMQLGVSRNSLREALA).

May be a regulatory protein for the LCT genes. The sequence is that of Putative L-lactate dehydrogenase operon regulatory protein (lldR) from Escherichia coli (strain K12).